The following is a 462-amino-acid chain: Asparagine--tRNA ligase (462 aa).

This sequence belongs to the class-II aminoacyl-tRNA synthetase family. Homodimer.

The protein resides in the cytoplasm. It catalyses the reaction tRNA(Asn) + L-asparagine + ATP = L-asparaginyl-tRNA(Asn) + AMP + diphosphate + H(+). The chain is Asparagine--tRNA ligase from Borreliella afzelii (strain PKo) (Borrelia afzelii).